Here is a 177-residue protein sequence, read N- to C-terminus: Large ribosomal subunit protein uL6 (177 aa).

Belongs to the universal ribosomal protein uL6 family. Part of the 50S ribosomal subunit.

Its function is as follows. This protein binds to the 23S rRNA, and is important in its secondary structure. It is located near the subunit interface in the base of the L7/L12 stalk, and near the tRNA binding site of the peptidyltransferase center. The polypeptide is Large ribosomal subunit protein uL6 (Rickettsia bellii (strain OSU 85-389)).